A 44-amino-acid polypeptide reads, in one-letter code: Thymosin beta (44 aa).

Basic and acidic residues predominate over residues 1-17 (MSDKPDVKEVESFDKTT). The tract at residues 1-44 (MSDKPDVKEVESFDKTTLKKTTTNEKNTLPTKEVIEQEKSGGSD) is disordered. A compositionally biased stretch (low complexity) spans 19 to 32 (KKTTTNEKNTLPTK). Residues 33–44 (EVIEQEKSGGSD) are compositionally biased toward basic and acidic residues.

This sequence belongs to the thymosin beta family.

The protein resides in the cytoplasm. It is found in the cytoskeleton. Its function is as follows. Plays an important role in the organization of the cytoskeleton. Binds to and sequesters actin monomers (G actin) and therefore inhibits actin polymerization. The sequence is that of Thymosin beta from Gillichthys mirabilis (Long-jawed mudsucker).